The following is a 963-amino-acid chain: Putative RNA Helicase B962L (963 aa).

Residues 43–229 (IPTSLADRVL…FGIGKENIIL (187 aa)) enclose the Helicase ATP-binding domain. 56–63 (SRTGSGKS) lines the ATP pocket. Residues 167 to 170 (DEAH) carry the DEAH box motif. A Helicase C-terminal domain is found at 253–459 (ACETALTIHK…TIKKNKEGVF (207 aa)). Residues 521-541 (GYFWQAAISDIATILAVVSVV) form a helical membrane-spanning segment.

It belongs to the DEAD box helicase family. DEAH subfamily.

The protein localises to the host membrane. Its subcellular location is the virion. It catalyses the reaction ATP + H2O = ADP + phosphate + H(+). This chain is Putative RNA Helicase B962L, found in Ornithodoros (relapsing fever ticks).